Here is a 693-residue protein sequence, read N- to C-terminus: DNA ligase (693 aa).

NAD(+) contacts are provided by residues 43–47 (DEEYD), 92–93 (SL), and Glu-123. The N6-AMP-lysine intermediate role is filled by Lys-125. 4 residues coordinate NAD(+): Arg-146, Glu-180, Lys-296, and Lys-320. The Zn(2+) site is built by Cys-414, Cys-417, Cys-433, and Cys-438. A BRCT domain is found at 595–684 (VKYDVLKGLT…AKLKGYNFDE (90 aa)).

Belongs to the NAD-dependent DNA ligase family. LigA subfamily. Requires Mg(2+) as cofactor. Mn(2+) serves as cofactor.

It catalyses the reaction NAD(+) + (deoxyribonucleotide)n-3'-hydroxyl + 5'-phospho-(deoxyribonucleotide)m = (deoxyribonucleotide)n+m + AMP + beta-nicotinamide D-nucleotide.. DNA ligase that catalyzes the formation of phosphodiester linkages between 5'-phosphoryl and 3'-hydroxyl groups in double-stranded DNA using NAD as a coenzyme and as the energy source for the reaction. It is essential for DNA replication and repair of damaged DNA. The sequence is that of DNA ligase from Thermotoga neapolitana (strain ATCC 49049 / DSM 4359 / NBRC 107923 / NS-E).